A 297-amino-acid chain; its full sequence is Phosphatidylserine decarboxylase proenzyme (297 aa).

Active-site charge relay system; for autoendoproteolytic cleavage activity residues include Asp100, His157, and Ser263. The active-site Schiff-base intermediate with substrate; via pyruvic acid; for decarboxylase activity is Ser263. Position 263 is a pyruvic acid (Ser); by autocatalysis (Ser263).

This sequence belongs to the phosphatidylserine decarboxylase family. PSD-B subfamily. Prokaryotic type I sub-subfamily. Heterodimer of a large membrane-associated beta subunit and a small pyruvoyl-containing alpha subunit. It depends on pyruvate as a cofactor. Is synthesized initially as an inactive proenzyme. Formation of the active enzyme involves a self-maturation process in which the active site pyruvoyl group is generated from an internal serine residue via an autocatalytic post-translational modification. Two non-identical subunits are generated from the proenzyme in this reaction, and the pyruvate is formed at the N-terminus of the alpha chain, which is derived from the carboxyl end of the proenzyme. The autoendoproteolytic cleavage occurs by a canonical serine protease mechanism, in which the side chain hydroxyl group of the serine supplies its oxygen atom to form the C-terminus of the beta chain, while the remainder of the serine residue undergoes an oxidative deamination to produce ammonia and the pyruvoyl prosthetic group on the alpha chain. During this reaction, the Ser that is part of the protease active site of the proenzyme becomes the pyruvoyl prosthetic group, which constitutes an essential element of the active site of the mature decarboxylase.

It is found in the cell membrane. It catalyses the reaction a 1,2-diacyl-sn-glycero-3-phospho-L-serine + H(+) = a 1,2-diacyl-sn-glycero-3-phosphoethanolamine + CO2. It participates in phospholipid metabolism; phosphatidylethanolamine biosynthesis; phosphatidylethanolamine from CDP-diacylglycerol: step 2/2. Functionally, catalyzes the formation of phosphatidylethanolamine (PtdEtn) from phosphatidylserine (PtdSer). This chain is Phosphatidylserine decarboxylase proenzyme, found in Actinobacillus pleuropneumoniae serotype 5b (strain L20).